The sequence spans 469 residues: ATP-dependent protease ATPase subunit HslU (469 aa).

ATP contacts are provided by residues I24, 66-71 (GVGKTE), D282, E347, and R419.

It belongs to the ClpX chaperone family. HslU subfamily. As to quaternary structure, a double ring-shaped homohexamer of HslV is capped on each side by a ring-shaped HslU homohexamer. The assembly of the HslU/HslV complex is dependent on binding of ATP.

It is found in the cytoplasm. Its function is as follows. ATPase subunit of a proteasome-like degradation complex; this subunit has chaperone activity. The binding of ATP and its subsequent hydrolysis by HslU are essential for unfolding of protein substrates subsequently hydrolyzed by HslV. HslU recognizes the N-terminal part of its protein substrates and unfolds these before they are guided to HslV for hydrolysis. In Listeria monocytogenes serovar 1/2a (strain ATCC BAA-679 / EGD-e), this protein is ATP-dependent protease ATPase subunit HslU.